We begin with the raw amino-acid sequence, 104 residues long: Phosphoribosyl-ATP pyrophosphatase (104 aa).

It belongs to the PRA-PH family.

The protein resides in the cytoplasm. The enzyme catalyses 1-(5-phospho-beta-D-ribosyl)-ATP + H2O = 1-(5-phospho-beta-D-ribosyl)-5'-AMP + diphosphate + H(+). It functions in the pathway amino-acid biosynthesis; L-histidine biosynthesis; L-histidine from 5-phospho-alpha-D-ribose 1-diphosphate: step 2/9. The chain is Phosphoribosyl-ATP pyrophosphatase from Allorhizobium ampelinum (strain ATCC BAA-846 / DSM 112012 / S4) (Agrobacterium vitis (strain S4)).